Consider the following 286-residue polypeptide: Bifunctional protein FolD (286 aa).

NADP(+) contacts are provided by residues 163–165, Ile188, and Ile229; that span reads GMS.

It belongs to the tetrahydrofolate dehydrogenase/cyclohydrolase family. As to quaternary structure, homodimer.

The enzyme catalyses (6R)-5,10-methylene-5,6,7,8-tetrahydrofolate + NADP(+) = (6R)-5,10-methenyltetrahydrofolate + NADPH. The catalysed reaction is (6R)-5,10-methenyltetrahydrofolate + H2O = (6R)-10-formyltetrahydrofolate + H(+). Its pathway is one-carbon metabolism; tetrahydrofolate interconversion. Catalyzes the oxidation of 5,10-methylenetetrahydrofolate to 5,10-methenyltetrahydrofolate and then the hydrolysis of 5,10-methenyltetrahydrofolate to 10-formyltetrahydrofolate. The polypeptide is Bifunctional protein FolD (Helicobacter hepaticus (strain ATCC 51449 / 3B1)).